The following is a 247-amino-acid chain: Carboxy-S-adenosyl-L-methionine synthase (247 aa).

S-adenosyl-L-methionine is bound by residues Tyr-39, Gly-64–Ser-66, Asp-89–Asn-90, Asp-117–Ile-118, Asn-132, and Arg-199.

It belongs to the class I-like SAM-binding methyltransferase superfamily. Cx-SAM synthase family. Homodimer.

The catalysed reaction is prephenate + S-adenosyl-L-methionine = carboxy-S-adenosyl-L-methionine + 3-phenylpyruvate + H2O. Its function is as follows. Catalyzes the conversion of S-adenosyl-L-methionine (SAM) to carboxy-S-adenosyl-L-methionine (Cx-SAM). The chain is Carboxy-S-adenosyl-L-methionine synthase from Cronobacter sakazakii (strain ATCC BAA-894) (Enterobacter sakazakii).